Here is a 50-residue protein sequence, read N- to C-terminus: uncharacterized protein (50 aa).

This is an uncharacterized protein from Treponema pallidum (strain Nichols).